A 338-amino-acid polypeptide reads, in one-letter code: tRNA N6-adenosine threonylcarbamoyltransferase (338 aa).

Fe cation contacts are provided by histidine 111 and histidine 115. Residues 134-138, aspartate 167, glycine 180, and asparagine 275 contribute to the substrate site; that span reads LLSGG. Aspartate 304 is a Fe cation binding site.

Belongs to the KAE1 / TsaD family. The cofactor is Fe(2+).

The protein resides in the cytoplasm. The enzyme catalyses L-threonylcarbamoyladenylate + adenosine(37) in tRNA = N(6)-L-threonylcarbamoyladenosine(37) in tRNA + AMP + H(+). Functionally, required for the formation of a threonylcarbamoyl group on adenosine at position 37 (t(6)A37) in tRNAs that read codons beginning with adenine. Is involved in the transfer of the threonylcarbamoyl moiety of threonylcarbamoyl-AMP (TC-AMP) to the N6 group of A37, together with TsaE and TsaB. TsaD likely plays a direct catalytic role in this reaction. This chain is tRNA N6-adenosine threonylcarbamoyltransferase, found in Leptospira interrogans serogroup Icterohaemorrhagiae serovar copenhageni (strain Fiocruz L1-130).